The chain runs to 105 residues: MVKLNSIEEVDLLANTKSAKKRIAIIKKRTLRNKMIKSRVKTFIRRFNESLATKDIEAIKERLRLAVKELDKAVSKGVLHKNTAARKKSKLYAKFNALLKSASNE.

It belongs to the bacterial ribosomal protein bS20 family.

Functionally, binds directly to 16S ribosomal RNA. This Caldanaerobacter subterraneus subsp. tengcongensis (strain DSM 15242 / JCM 11007 / NBRC 100824 / MB4) (Thermoanaerobacter tengcongensis) protein is Small ribosomal subunit protein bS20.